A 204-amino-acid polypeptide reads, in one-letter code: bMERB domain-containing protein 1 (204 aa).

One can recognise a bMERB domain in the interval 3 to 150 (LKQSLSTHLE…EQEEDKEMAD (148 aa)). The disordered stretch occupies residues 162-187 (VTKSPASSRAEKKAEPPPSKPTVAKT).

This is bMERB domain-containing protein 1 (BMERB1) from Pongo abelii (Sumatran orangutan).